A 336-amino-acid polypeptide reads, in one-letter code: D-erythrose-4-phosphate dehydrogenase (336 aa).

NAD(+) is bound by residues 11–12 (RI) and Arg-80. Substrate is bound by residues 153–155 (SCT), Arg-199, 212–213 (TK), and Arg-235. Residue Cys-154 is the Nucleophile of the active site. An NAD(+)-binding site is contributed by Asn-317.

This sequence belongs to the glyceraldehyde-3-phosphate dehydrogenase family. Epd subfamily. In terms of assembly, homotetramer.

Its subcellular location is the cytoplasm. It carries out the reaction D-erythrose 4-phosphate + NAD(+) + H2O = 4-phospho-D-erythronate + NADH + 2 H(+). Its pathway is cofactor biosynthesis; pyridoxine 5'-phosphate biosynthesis; pyridoxine 5'-phosphate from D-erythrose 4-phosphate: step 1/5. Its function is as follows. Catalyzes the NAD-dependent conversion of D-erythrose 4-phosphate to 4-phosphoerythronate. The sequence is that of D-erythrose-4-phosphate dehydrogenase from Aeromonas hydrophila subsp. hydrophila (strain ATCC 7966 / DSM 30187 / BCRC 13018 / CCUG 14551 / JCM 1027 / KCTC 2358 / NCIMB 9240 / NCTC 8049).